The following is an 84-amino-acid chain: Large ribosomal subunit protein bL27 (84 aa).

Positions 1 to 21 (MAHKKGGGSTKNGRDSNPKYL) are disordered.

This sequence belongs to the bacterial ribosomal protein bL27 family.

This Chlorobium phaeovibrioides (strain DSM 265 / 1930) (Prosthecochloris vibrioformis (strain DSM 265)) protein is Large ribosomal subunit protein bL27.